Consider the following 334-residue polypeptide: Short-chain dehydrogenase/reductase (334 aa).

5 residues coordinate NADP(+): Leu-44, Lys-68, Asp-93, Asn-120, and Lys-152. Residues Ser-176 and Tyr-205 each act as proton donor in the active site. Residues Tyr-205, Lys-209, and Asn-239 each coordinate NADP(+). Residue Lys-209 is the Lowers pKa of active site Tyr of the active site.

Belongs to the short-chain dehydrogenases/reductases (SDR) family.

It participates in mycotoxin biosynthesis. Functionally, short-chain dehydrogenase/reductase; part of the 2 gene clusters that mediate the biosynthesis of fusicoccins, diterpene glucosides that display phytohormone-like activity and function as potent activators of plasma membrane H(+)-ATPases in plants by modifying 14-3-3 proteins and cause the plant disease constriction canker. The first step in the pathway is performed by the fusicoccadiene synthase PaFS that possesses both prenyl transferase and terpene cyclase activity, converting isopentenyl diphosphate and dimethylallyl diphosphate into geranylgeranyl diphosphate (GGDP) and successively converting GGDP into fusicocca-2,10(14)-diene, a precursor for fusicoccin H. The second step is the oxidation at the C-8 position by the cytochrome P450 monooxygenase PaP450-2 to yield fusicocca-2,10(14)-diene-8-beta-ol. The cytochrome P450 monooxygenase PaP450-1 then catalyzes the hydroxylation at the C-16 position to produce fusicocca-2,10(14)-diene-8-beta,16-diol. The dioxygenase fc-dox then catalyzes the 16-oxydation of fusicocca-2,10(14)-diene-8-beta,16-diol to yield an aldehyde (8-beta-hydroxyfusicocca-1,10(14)-dien-16-al). The short-chain dehydrogenase/reductase fc-sdr catalyzes the reduction of the aldehyde to yield fusicocca-1,10(14)-diene-8-beta,16-diol. The next step is the hydroxylation at C-9 performed by the cytochrome P450 monooxygenase PaP450-3 that leads to fusicoccin H aglycon which is glycosylated to fusicoccin H by the O-glycosyltransferase PaGT. Hydroxylation at C-12 by the cytochrome P450 monooxygenase PaP450-4 leads then to the production of fusicoccin Q and is followed by methylation by the O-methyltransferase PaMT to yield fusicoccin P. Fusicoccin P is further converted to fusicoccin J via prenylation by the O-glucose prenyltransferase PaPT. Cytochrome P450 monooxygenase PaP450-5 then performs hydroxylation at C-19 to yield dideacetyl-fusicoccin A which is acetylated to 3'-O-deacetyl-fusicoccin A by the O-acetyltransferase PaAT-2. Finally, a another acetylation by the O-acetyltransferase PaAT-1 yields fusicoccin A. The chain is Short-chain dehydrogenase/reductase from Phomopsis amygdali (Fusicoccum amygdali).